We begin with the raw amino-acid sequence, 218 residues long: Small ribosomal subunit protein uS3 (218 aa).

Residues 38–106 (IREFISKRLS…RVHINILEIK (69 aa)) form the KH type-2 domain.

The protein belongs to the universal ribosomal protein uS3 family. Part of the 30S ribosomal subunit. Forms a tight complex with proteins S10 and S14.

Its function is as follows. Binds the lower part of the 30S subunit head. Binds mRNA in the 70S ribosome, positioning it for translation. This is Small ribosomal subunit protein uS3 from Bacillus velezensis (strain DSM 23117 / BGSC 10A6 / LMG 26770 / FZB42) (Bacillus amyloliquefaciens subsp. plantarum).